The chain runs to 229 residues: Potassium/proton antiporter CemA (229 aa).

3 consecutive transmembrane segments (helical) span residues 7–27, 106–126, and 189–209; these read LTPL…SLSF, IILH…FFIM, and IISG…KYWI.

This sequence belongs to the CemA family.

The protein localises to the plastid. It is found in the chloroplast inner membrane. The catalysed reaction is K(+)(in) + H(+)(out) = K(+)(out) + H(+)(in). In terms of biological role, contributes to K(+)/H(+) antiport activity by supporting proton efflux to control proton extrusion and homeostasis in chloroplasts in a light-dependent manner to modulate photosynthesis. Prevents excessive induction of non-photochemical quenching (NPQ) under continuous-light conditions. Indirectly promotes efficient inorganic carbon uptake into chloroplasts. In Ceratophyllum demersum (Rigid hornwort), this protein is Potassium/proton antiporter CemA.